Reading from the N-terminus, the 316-residue chain is Ferrochelatase (316 aa).

Residues H190 and E271 each contribute to the Fe cation site.

This sequence belongs to the ferrochelatase family.

The protein resides in the cytoplasm. The enzyme catalyses heme b + 2 H(+) = protoporphyrin IX + Fe(2+). The protein operates within porphyrin-containing compound metabolism; protoheme biosynthesis; protoheme from protoporphyrin-IX: step 1/1. Its function is as follows. Catalyzes the ferrous insertion into protoporphyrin IX. This is Ferrochelatase from Sulfurimonas denitrificans (strain ATCC 33889 / DSM 1251) (Thiomicrospira denitrificans (strain ATCC 33889 / DSM 1251)).